We begin with the raw amino-acid sequence, 31 residues long: Chassatide C5 (31 aa).

Positions 1–31 form a cross-link, cyclopeptide (Gly-Asn); the sequence is GVIPCGESCVFIPCISSVVGCSCKNKVCYRN. Disulfide bonds link cysteine 5/cysteine 21, cysteine 9/cysteine 23, and cysteine 14/cysteine 28.

This is a cyclic peptide. In terms of tissue distribution, expressed in pedicel, root and stem but not in leaf and fruit (at protein level).

Its function is as follows. Probably participates in a plant defense mechanism. The protein is Chassatide C5 of Chassalia chartacea (Chassalia curviflora).